The following is an 82-amino-acid chain: Small ribosomal subunit protein uS17 (82 aa).

It belongs to the universal ribosomal protein uS17 family. In terms of assembly, part of the 30S ribosomal subunit.

In terms of biological role, one of the primary rRNA binding proteins, it binds specifically to the 5'-end of 16S ribosomal RNA. The polypeptide is Small ribosomal subunit protein uS17 (Sulfurimonas denitrificans (strain ATCC 33889 / DSM 1251) (Thiomicrospira denitrificans (strain ATCC 33889 / DSM 1251))).